Here is a 500-residue protein sequence, read N- to C-terminus: Trehalose-6-phosphate synthase (500 aa).

Arginine 28 provides a ligand contact to D-glucose 6-phosphate. Glycine 48 to glycine 49 provides a ligand contact to UDP-alpha-D-glucose. D-glucose 6-phosphate is bound by residues tyrosine 104 and aspartate 158. Residues arginine 300 and lysine 305 each contribute to the UDP-alpha-D-glucose site. Residue arginine 338 coordinates D-glucose 6-phosphate. A UDP-alpha-D-glucose-binding site is contributed by leucine 403–glutamate 407.

Belongs to the glycosyltransferase 20 family. In terms of assembly, homotetramer.

It catalyses the reaction ADP-alpha-D-glucose + D-glucose 6-phosphate = alpha,alpha-trehalose 6-phosphate + ADP + H(+). It carries out the reaction CDP-alpha-D-glucose + D-glucose 6-phosphate = alpha,alpha-trehalose 6-phosphate + CDP + H(+). The enzyme catalyses GDP-alpha-D-glucose + D-glucose 6-phosphate = alpha,alpha-trehalose 6-phosphate + GDP + H(+). The catalysed reaction is TDP-alpha-D-glucose + D-glucose 6-phosphate = 5-methyl-UDP + alpha,alpha-trehalose 6-phosphate + H(+). It catalyses the reaction D-glucose 6-phosphate + UDP-alpha-D-glucose = alpha,alpha-trehalose 6-phosphate + UDP + H(+). Its pathway is glycan biosynthesis; trehalose biosynthesis. Probably involved in the osmoprotection via the biosynthesis of trehalose and in the production of glycogen and alpha-glucan via the TreS-Pep2 branch involved in the biosynthesis of maltose-1-phosphate (M1P). Catalyzes the transfer of glucose from UDP-glucose (UDP-Glc) to D-glucose 6-phosphate (Glc-6-P) to form trehalose-6-phosphate. Probably also able to use ADP-Glc, CDP-Glc, GDP-Glc and TDP-Glc as glucosyl donors. The chain is Trehalose-6-phosphate synthase from Mycobacterium ulcerans (strain Agy99).